The following is a 624-amino-acid chain: (-)-beta-phellandrene synthase 3, chloroplastic (624 aa).

A chloroplast-targeting transit peptide spans 1 to 48 (MAIVSSVPLASKSCLHKSLISSIHKLKPFCRTIPTLGMSRPGKYVMPS). Mg(2+)-binding residues include D375, D379, and D527. A DDXXD motif motif is present at residues 375–379 (DDMYD).

It belongs to the terpene synthase family. Tpsd subfamily. It depends on Mg(2+) as a cofactor. Mn(2+) is required as a cofactor.

Its subcellular location is the plastid. It is found in the chloroplast. The enzyme catalyses (2E)-geranyl diphosphate = (-)-beta-phellandrene + diphosphate. It functions in the pathway terpene metabolism; oleoresin biosynthesis. Its function is as follows. Terpene synthase (TPS) involved in the biosynthesis of monoterpene natural products included in conifer oleoresin secretions and volatile emissions; these compounds contribute to biotic and abiotic stress defense against herbivores and pathogens. Catalyzes the conversion of (2E)-geranyl diphosphate (GPP) to (-)-beta-phellandrene. This chain is (-)-beta-phellandrene synthase 3, chloroplastic, found in Picea sitchensis (Sitka spruce).